The primary structure comprises 602 residues: Probable beta-glucosidase btgE (602 aa).

Residues 1–18 (MRGAFLAAAAAVAGTAMA) form the signal peptide. 2 disordered regions span residues 61 to 94 (PPTL…SVVT) and 116 to 166 (GVDA…TSFS). The span at 74-94 (PSSSSSSEVPSVPSSESSVVT) shows a compositional bias: low complexity. Residues 152-166 (TSESPLPTPGVTSFS) show a composition bias toward polar residues. Glutamate 443 serves as the catalytic Proton donor. The Nucleophile role is filled by glutamate 538.

Belongs to the glycosyl hydrolase 17 family.

The protein resides in the secreted. It is found in the cell wall. The catalysed reaction is Hydrolysis of terminal, non-reducing beta-D-glucosyl residues with release of beta-D-glucose.. It functions in the pathway glycan metabolism; cellulose degradation. In terms of biological role, beta-glucosidases are one of a number of cellulolytic enzymes involved in the degradation of cellulosic biomass. Catalyzes the last step releasing glucose from the inhibitory cellobiose. The chain is Probable beta-glucosidase btgE (btgE) from Aspergillus flavus (strain ATCC 200026 / FGSC A1120 / IAM 13836 / NRRL 3357 / JCM 12722 / SRRC 167).